Consider the following 904-residue polypeptide: DNA mismatch repair protein MutS (904 aa).

654-661 (GPNMAGKS) provides a ligand contact to ATP.

The protein belongs to the DNA mismatch repair MutS family.

Its function is as follows. This protein is involved in the repair of mismatches in DNA. It is possible that it carries out the mismatch recognition step. This protein has a weak ATPase activity. The chain is DNA mismatch repair protein MutS from Caulobacter sp. (strain K31).